The sequence spans 278 residues: ADP-dependent (S)-NAD(P)H-hydrate dehydratase (278 aa).

A YjeF C-terminal domain is found at 4 to 276 (DDDLVRQVIR…KAIPSWMKKL (273 aa)). The (6S)-NADPHX site is built by Ala-39, Gly-102, and His-152. Gly-216 lines the AMP pocket. Residue Asp-217 coordinates (6S)-NADPHX.

Belongs to the NnrD/CARKD family. Homotetramer. The cofactor is Mg(2+).

It catalyses the reaction (6S)-NADHX + ADP = AMP + phosphate + NADH + H(+). The catalysed reaction is (6S)-NADPHX + ADP = AMP + phosphate + NADPH + H(+). Catalyzes the dehydration of the S-form of NAD(P)HX at the expense of ADP, which is converted to AMP. Together with NAD(P)HX epimerase, which catalyzes the epimerization of the S- and R-forms, the enzyme allows the repair of both epimers of NAD(P)HX, a damaged form of NAD(P)H that is a result of enzymatic or heat-dependent hydration. The chain is ADP-dependent (S)-NAD(P)H-hydrate dehydratase from Streptococcus thermophilus.